A 146-amino-acid polypeptide reads, in one-letter code: MLSEFKRFALRGNVLDLAVGVVIGAAFNQIVNSLVNDVIMPPLGFLVGKMDFSNLYLNLSLTPYASLAEAREAGAPVIAYGLFLNNLLNFLIVAFAVFLLVRQVNRWRPTPPPEPPKTKECPYCLSTVPVKATRCAHCTSDLTAES.

Helical transmembrane passes span 14 to 34 and 81 to 101; these read VLDL…VNSL and GLFL…FLLV.

Belongs to the MscL family. As to quaternary structure, homopentamer.

The protein resides in the cell membrane. In terms of biological role, channel that opens in response to stretch forces in the membrane lipid bilayer. May participate in the regulation of osmotic pressure changes within the cell. The protein is Large-conductance mechanosensitive channel of Symbiobacterium thermophilum (strain DSM 24528 / JCM 14929 / IAM 14863 / T).